Reading from the N-terminus, the 470-residue chain is Amino-acid permease RocC (470 aa).

The next 12 helical transmembrane spans lie at 18-38, 44-64, 90-110, 119-139, 159-179, 196-216, 243-263, 281-301, 338-358, 360-380, 409-429, and 433-453; these read FMIA…GFTI, LGAI…MLCL, GFMI…LELT, WLPS…IFLI, VAAI…LIDF, GLFP…NFSF, VIWR…AILP, IGIP…ILSV, ALLI…MAAE, VYLW…MSIC, LVPI…IFIP, and IGLY…HLSI.

The protein belongs to the amino acid-polyamine-organocation (APC) superfamily.

The protein resides in the cell membrane. Functionally, putative transport protein involved in arginine degradative pathway. Probably transports arginine or ornithine. The sequence is that of Amino-acid permease RocC (rocC) from Bacillus subtilis (strain 168).